The following is a 479-amino-acid chain: Probable periplasmic serine endoprotease DegP-like (479 aa).

The first 27 residues, Met-1–Ala-27, serve as a signal peptide directing secretion. Residues His-117, Asp-147, and Ser-220 each act as charge relay system in the active site. Substrate-binding positions include Gly-218–Ser-220 and Leu-275–Ile-279. 2 PDZ domains span residues Leu-264 to Gly-355 and Asp-361 to Gly-468. The segment at Pro-368–Val-395 is disordered.

This sequence belongs to the peptidase S1C family.

It localises to the periplasm. It catalyses the reaction Acts on substrates that are at least partially unfolded. The cleavage site P1 residue is normally between a pair of hydrophobic residues, such as Val-|-Val.. Its function is as follows. Might be efficient in the degradation of transiently denatured and unfolded proteins which accumulate in the periplasm following stress conditions. In Pseudomonas putida (strain W619), this protein is Probable periplasmic serine endoprotease DegP-like.